The following is a 205-amino-acid chain: Guanylate kinase (205 aa).

In terms of domain architecture, Guanylate kinase-like spans 17–195; that stretch reads PRLTVLSGPS…VSRELLALML (179 aa). 24 to 31 contributes to the ATP binding site; the sequence is GPSGVGKS.

The protein belongs to the guanylate kinase family.

The protein resides in the cytoplasm. It carries out the reaction GMP + ATP = GDP + ADP. Its function is as follows. Essential for recycling GMP and indirectly, cGMP. The protein is Guanylate kinase of Streptomyces kasugaensis.